Reading from the N-terminus, the 296-residue chain is Protease HtpX homolog (296 aa).

Helical transmembrane passes span 14–34 (VVLLIVFFCLLAAIGAAVGYL) and 39–59 (YQFGLVLALIIGVIYAVSMIF). Histidine 143 lines the Zn(2+) pocket. Glutamate 144 is a catalytic residue. Histidine 147 is a binding site for Zn(2+). The next 2 helical transmembrane spans lie at 158-178 (IAVALASAVTLISSIGSRMLF) and 195-215 (ILVLIFSILSLILAPLAASLV). Glutamate 224 contributes to the Zn(2+) binding site.

Belongs to the peptidase M48B family. Zn(2+) serves as cofactor.

The protein resides in the cell membrane. The sequence is that of Protease HtpX homolog from Streptococcus agalactiae serotype Ia (strain ATCC 27591 / A909 / CDC SS700).